We begin with the raw amino-acid sequence, 388 residues long: MIKNPKVLILTAHYGNGHVQVAKTLEQTFRQKGIEDVIVCDLFGESHPFITDITKYLYLKSYTIGKELYRLFYYGVEKIYDKKIASWYANFGRKRLKTLLQVEKPDIVINTFPIIAVPELKKQTGISIPVYNVLTDFCVHKIWIHREVDRYFVATDHVKELMVDIGVPAEQIVETGIPIRSSFELKVNPEIIYTKYQLCKNKKILLIVAGAHGVLGNVKELCQSFMSVPNLQIVVVCGKNEALKQDLLSLQKQNSDALKVFGYVENIDELFRVTSCMITKPGGITLSEAAALQVPVILYKPVPGQENENAMYFERKGAAVVIRDDSEVFAKTEALLQDDVKLLQMKEAMKSIYLPEPAGHIVDAILAENHAEPRHIPIKSPALAQSFT.

Belongs to the glycosyltransferase 28 family. UgtP subfamily.

It localises to the cell membrane. The catalysed reaction is a 1,2-diacyl-3-O-(beta-D-glucopyranosyl)-sn-glycerol + UDP-alpha-D-glucose = a 1,2-diacyl-3-O-(beta-D-Glc-(1-&gt;6)-beta-D-Glc)-sn-glycerol + UDP + H(+). The enzyme catalyses a 1,2-diacyl-3-O-(beta-D-Glc-(1-&gt;6)-beta-D-Glc)-sn-glycerol + UDP-alpha-D-glucose = a 1,2-diacyl-3-O-(beta-D-Glc-(1-&gt;6)-beta-D-Glc-(1-&gt;6)-beta-D-Glc)-sn-glycerol + UDP + H(+). It catalyses the reaction a 1,2-diacyl-sn-glycerol + UDP-alpha-D-glucose = a 1,2-diacyl-3-O-(beta-D-glucopyranosyl)-sn-glycerol + UDP + H(+). It functions in the pathway glycolipid metabolism; diglucosyl-diacylglycerol biosynthesis. In terms of biological role, processive glucosyltransferase involved in the biosynthesis of both the bilayer- and non-bilayer-forming membrane glucolipids. Is able to successively transfer up to three glucosyl residues to diacylglycerol (DAG), thereby catalyzing the formation of beta-monoglucosyl-DAG (3-O-(beta-D-glucopyranosyl)-1,2-diacyl-sn-glycerol), beta-diglucosyl-DAG (3-O-(beta-D-glucopyranosyl-beta-(1-&gt;6)-D-glucopyranosyl)-1,2-diacyl-sn-glycerol) and beta-triglucosyl-DAG (3-O-(beta-D-glucopyranosyl-beta-(1-&gt;6)-D-glucopyranosyl-beta-(1-&gt;6)-D-glucopyranosyl)-1,2-diacyl-sn-glycerol). Beta-diglucosyl-DAG is the predominant glycolipid found in Bacillales and is also used as a membrane anchor for lipoteichoic acid (LTA). The protein is Processive diacylglycerol beta-glucosyltransferase of Bacillus cereus (strain B4264).